Here is a 342-residue protein sequence, read N- to C-terminus: Phosphate acyltransferase (342 aa).

The protein belongs to the PlsX family. In terms of assembly, homodimer. Probably interacts with PlsY.

The protein localises to the cytoplasm. It catalyses the reaction a fatty acyl-[ACP] + phosphate = an acyl phosphate + holo-[ACP]. The protein operates within lipid metabolism; phospholipid metabolism. Catalyzes the reversible formation of acyl-phosphate (acyl-PO(4)) from acyl-[acyl-carrier-protein] (acyl-ACP). This enzyme utilizes acyl-ACP as fatty acyl donor, but not acyl-CoA. The protein is Phosphate acyltransferase of Legionella pneumophila (strain Corby).